The primary structure comprises 373 residues: DNA replication and repair protein RecF (373 aa).

ATP is bound at residue 30-37 (GANGSGKT).

The protein belongs to the RecF family.

The protein resides in the cytoplasm. Its function is as follows. The RecF protein is involved in DNA metabolism; it is required for DNA replication and normal SOS inducibility. RecF binds preferentially to single-stranded, linear DNA. It also seems to bind ATP. The protein is DNA replication and repair protein RecF of Marinobacter nauticus (strain ATCC 700491 / DSM 11845 / VT8) (Marinobacter aquaeolei).